The primary structure comprises 325 residues: MHKKIDPQTKELYLQKKGEYKEKIKELVQKKKELLSTDNKDELIKINEKIKRYKILYKNKDPNLIHFKDDYNFDNIFEIDNYNLWYSNKAKHALKDINLGIKKNKVTALIGPSGCGKSTFIRSLNRMHDLTDGVSKTGSIFFLSKNIYSKTLPELELRSKVGMVFQKPTPFSLSIYENIAYALKSHGIKDKIKIDQIVKESLEGAALWDDVKDILFQSAHGLSGGQQQRLSIARAIALKPEVLLMDEPTSALDPIATNKIEQLIHQLKKSYSIVIVTHSMAQAQRVSDETVFFYEGRVLEHGTTKQIFTQPNNEKTKDYIDGRIG.

Residues 79–320 (IDNYNLWYSN…PNNEKTKDYI (242 aa)) form the ABC transporter domain. 111 to 118 (GPSGCGKS) lines the ATP pocket.

It belongs to the ABC transporter superfamily. Phosphate importer (TC 3.A.1.7) family. As to quaternary structure, the complex is composed of two ATP-binding proteins (PstB), two transmembrane proteins (PstC and PstA) and a solute-binding protein (PstS).

The protein localises to the cell membrane. It carries out the reaction phosphate(out) + ATP + H2O = ADP + 2 phosphate(in) + H(+). Its function is as follows. Part of the ABC transporter complex PstSACB involved in phosphate import. Responsible for energy coupling to the transport system. The sequence is that of Phosphate import ATP-binding protein PstB from Mycoplasmoides gallisepticum (strain R(low / passage 15 / clone 2)) (Mycoplasma gallisepticum).